The following is a 243-amino-acid chain: Pyridoxine 5'-phosphate synthase (243 aa).

Residue asparagine 9 participates in 3-amino-2-oxopropyl phosphate binding. 11 to 12 (DH) is a 1-deoxy-D-xylulose 5-phosphate binding site. Residue arginine 20 participates in 3-amino-2-oxopropyl phosphate binding. Histidine 45 (proton acceptor) is an active-site residue. 1-deoxy-D-xylulose 5-phosphate contacts are provided by arginine 47 and histidine 52. Glutamate 72 acts as the Proton acceptor in catalysis. Position 102 (threonine 102) interacts with 1-deoxy-D-xylulose 5-phosphate. Histidine 193 acts as the Proton donor in catalysis. Residues glycine 194 and 215–216 (GH) contribute to the 3-amino-2-oxopropyl phosphate site.

This sequence belongs to the PNP synthase family. As to quaternary structure, homooctamer; tetramer of dimers.

Its subcellular location is the cytoplasm. The enzyme catalyses 3-amino-2-oxopropyl phosphate + 1-deoxy-D-xylulose 5-phosphate = pyridoxine 5'-phosphate + phosphate + 2 H2O + H(+). Its pathway is cofactor biosynthesis; pyridoxine 5'-phosphate biosynthesis; pyridoxine 5'-phosphate from D-erythrose 4-phosphate: step 5/5. In terms of biological role, catalyzes the complicated ring closure reaction between the two acyclic compounds 1-deoxy-D-xylulose-5-phosphate (DXP) and 3-amino-2-oxopropyl phosphate (1-amino-acetone-3-phosphate or AAP) to form pyridoxine 5'-phosphate (PNP) and inorganic phosphate. This Yersinia pseudotuberculosis serotype I (strain IP32953) protein is Pyridoxine 5'-phosphate synthase.